The sequence spans 630 residues: 1,4-alpha-glucan branching enzyme GlgB (630 aa).

Aspartate 311 acts as the Nucleophile in catalysis. Glutamate 362 functions as the Proton donor in the catalytic mechanism.

The protein belongs to the glycosyl hydrolase 13 family. GlgB subfamily. As to quaternary structure, monomer.

It carries out the reaction Transfers a segment of a (1-&gt;4)-alpha-D-glucan chain to a primary hydroxy group in a similar glucan chain.. It participates in glycan biosynthesis; glycogen biosynthesis. Functionally, catalyzes the formation of the alpha-1,6-glucosidic linkages in glycogen by scission of a 1,4-alpha-linked oligosaccharide from growing alpha-1,4-glucan chains and the subsequent attachment of the oligosaccharide to the alpha-1,6 position. This Aquifex aeolicus (strain VF5) protein is 1,4-alpha-glucan branching enzyme GlgB.